We begin with the raw amino-acid sequence, 287 residues long: Diaminopimelate epimerase (287 aa).

Residues asparagine 15 and asparagine 66 each contribute to the substrate site. Cysteine 75 serves as the catalytic Proton donor. Residues 76–77 (GN), asparagine 170, asparagine 203, and 221–222 (ER) contribute to the substrate site. Cysteine 230 serves as the catalytic Proton acceptor. 231 to 232 (GT) is a substrate binding site.

The protein belongs to the diaminopimelate epimerase family. As to quaternary structure, homodimer.

Its subcellular location is the cytoplasm. The enzyme catalyses (2S,6S)-2,6-diaminopimelate = meso-2,6-diaminopimelate. It functions in the pathway amino-acid biosynthesis; L-lysine biosynthesis via DAP pathway; DL-2,6-diaminopimelate from LL-2,6-diaminopimelate: step 1/1. Its function is as follows. Catalyzes the stereoinversion of LL-2,6-diaminopimelate (L,L-DAP) to meso-diaminopimelate (meso-DAP), a precursor of L-lysine and an essential component of the bacterial peptidoglycan. The protein is Diaminopimelate epimerase of Desulfovibrio desulfuricans (strain ATCC 27774 / DSM 6949 / MB).